Reading from the N-terminus, the 103-residue chain is Large ribosomal subunit protein bL21 (103 aa).

Belongs to the bacterial ribosomal protein bL21 family. Part of the 50S ribosomal subunit. Contacts protein L20.

In terms of biological role, this protein binds to 23S rRNA in the presence of protein L20. The protein is Large ribosomal subunit protein bL21 of Acetivibrio thermocellus (strain ATCC 27405 / DSM 1237 / JCM 9322 / NBRC 103400 / NCIMB 10682 / NRRL B-4536 / VPI 7372) (Clostridium thermocellum).